The primary structure comprises 69 residues: Sec-independent protein translocase protein TatA (69 aa).

A helical membrane pass occupies residues 1–21 (MFGLGTMEMVIILVIVLVIFG). A disordered region spans residues 44–69 (NAEDDAPAEPEVSKPAAAESTEKKDA).

This sequence belongs to the TatA/E family. In terms of assembly, the Tat system comprises two distinct complexes: a TatABC complex, containing multiple copies of TatA, TatB and TatC subunits, and a separate TatA complex, containing only TatA subunits. Substrates initially bind to the TatABC complex, which probably triggers association of the separate TatA complex to form the active translocon.

It localises to the cell inner membrane. Part of the twin-arginine translocation (Tat) system that transports large folded proteins containing a characteristic twin-arginine motif in their signal peptide across membranes. TatA could form the protein-conducting channel of the Tat system. The sequence is that of Sec-independent protein translocase protein TatA from Magnetococcus marinus (strain ATCC BAA-1437 / JCM 17883 / MC-1).